The chain runs to 1032 residues: Exportin-T (1032 aa).

It belongs to the exportin family.

Its subcellular location is the nucleus. It is found in the cytoplasm. Functionally, tRNA nucleus export receptor which facilitates tRNA translocation across the nuclear pore complex. Involved in pre-tRNA splicing, probably by affecting the interaction of pre-tRNA with splicing endonuclease. The sequence is that of Exportin-T (los1) from Aspergillus fumigatus (strain ATCC MYA-4609 / CBS 101355 / FGSC A1100 / Af293) (Neosartorya fumigata).